We begin with the raw amino-acid sequence, 515 residues long: Spermatogenesis-associated protein 2 (515 aa).

Residues 78–150 (ALHCAFSMLE…VYKLKELVES (73 aa)) enclose the PUB domain. Residues 321–338 (TYFSTQDDVDLYTDSEPR) carry the PIM motif motif. The tract at residues 429 to 452 (GHQTQGLDRLAPVHSKPKPSTTAT) is disordered.

It belongs to the SPATA2 family. Interacts (via the PIM motif) with RNF31/HOIP (via the PUB domain); the interaction is direct. Interacts (via the PUB domain) with CYLD; the interaction is direct. In terms of tissue distribution, widely expressed, with highest expression in testis, lung and intestine, and lower expression in brain, heart and spleen. Present at high level in Sertoli cells: expressed from stage I to stage XII of the testis seminiferous epithelium (at protein level).

Its subcellular location is the cytoplasm. The protein localises to the nucleus. Functionally, bridging factor that mediates the recruitment of CYLD to the LUBAC complex, thereby regulating TNF-alpha-induced necroptosis. Acts as a direct binding intermediate that bridges RNF31/HOIP, the catalytic subunit of the LUBAC complex, and the deubiquitinase (CYLD), thereby recruiting CYLD to the TNF-R1 signaling complex (TNF-RSC). Required to activate the 'Met-1'- (linear) and 'Lys-63'-linked deubiquitinase activities of CYLD. Controls the kinase activity of RIPK1 and TNF-alpha-induced necroptosis by promoting 'Met-1'-linked deubiquitination of RIPK1 by CYLD. This Mus musculus (Mouse) protein is Spermatogenesis-associated protein 2.